Reading from the N-terminus, the 487-residue chain is 6-phosphogluconate dehydrogenase, decarboxylating 3, chloroplastic (487 aa).

Methionine 1 carries the post-translational modification N-acetylmethionine. NADP(+) contacts are provided by residues 13-18 (GLAVMG), 36-38 (NRT), 80-82 (VKA), and asparagine 108. Residues asparagine 108 and 134-136 (SGG) each bind substrate. The Proton acceptor role is filled by lysine 188. A substrate-binding site is contributed by 191–192 (HN). Glutamate 195 serves as the catalytic Proton donor. Tyrosine 196, lysine 266, arginine 293, arginine 458, and histidine 464 together coordinate substrate.

The protein belongs to the 6-phosphogluconate dehydrogenase family. Forms homodimer. Forms heterodimers with PGD1 or PGD2.

The protein localises to the plastid. It is found in the chloroplast. The protein resides in the cytoplasm. Its subcellular location is the cytosol. It catalyses the reaction 6-phospho-D-gluconate + NADP(+) = D-ribulose 5-phosphate + CO2 + NADPH. It functions in the pathway carbohydrate degradation; pentose phosphate pathway; D-ribulose 5-phosphate from D-glucose 6-phosphate (oxidative stage): step 3/3. In terms of biological role, catalyzes the oxidative decarboxylation of 6-phosphogluconate to ribulose 5-phosphate and CO(2), with concomitant reduction of NADP to NADPH. This chain is 6-phosphogluconate dehydrogenase, decarboxylating 3, chloroplastic, found in Arabidopsis thaliana (Mouse-ear cress).